The chain runs to 344 residues: Oxygen sensor histidine kinase NreB (344 aa).

[4Fe-4S] cluster is bound by residues C58, C61, C73, and C76. The Histidine kinase domain maps to R152 to I344. Position 158 is a phosphohistidine; by autocatalysis (H158).

It depends on [4Fe-4S] cluster as a cofactor. Post-translationally, autophosphorylated.

The protein localises to the cytoplasm. It catalyses the reaction ATP + protein L-histidine = ADP + protein N-phospho-L-histidine.. Its function is as follows. Member of the two-component regulatory system NreB/NreC involved in the control of dissimilatory nitrate/nitrite reduction in response to oxygen. NreB functions as a direct oxygen sensor histidine kinase which is autophosphorylated, in the absence of oxygen, probably at the conserved histidine residue, and transfers its phosphate group probably to a conserved aspartate residue of NreC. NreB/NreC activates the expression of the nitrate (narGHJI) and nitrite (nir) reductase operons, as well as the putative nitrate transporter gene narT. The sequence is that of Oxygen sensor histidine kinase NreB (nreB) from Staphylococcus aureus (strain Mu3 / ATCC 700698).